The primary structure comprises 227 residues: Urease accessory protein UreF (227 aa).

It belongs to the UreF family. UreD, UreF and UreG form a complex that acts as a GTP-hydrolysis-dependent molecular chaperone, activating the urease apoprotein by helping to assemble the nickel containing metallocenter of UreC. The UreE protein probably delivers the nickel.

It is found in the cytoplasm. Its function is as follows. Required for maturation of urease via the functional incorporation of the urease nickel metallocenter. In Actinobacillus pleuropneumoniae serotype 5b (strain L20), this protein is Urease accessory protein UreF.